We begin with the raw amino-acid sequence, 321 residues long: Lipoyl synthase (321 aa).

Residues Cys68, Cys73, Cys79, Cys94, Cys98, Cys101, and Ser308 each coordinate [4Fe-4S] cluster. A Radical SAM core domain is found at 80 to 297; that stretch reads FNHGTATFMI…KEIALELGFT (218 aa).

The protein belongs to the radical SAM superfamily. Lipoyl synthase family. [4Fe-4S] cluster serves as cofactor.

Its subcellular location is the cytoplasm. The catalysed reaction is [[Fe-S] cluster scaffold protein carrying a second [4Fe-4S](2+) cluster] + N(6)-octanoyl-L-lysyl-[protein] + 2 oxidized [2Fe-2S]-[ferredoxin] + 2 S-adenosyl-L-methionine + 4 H(+) = [[Fe-S] cluster scaffold protein] + N(6)-[(R)-dihydrolipoyl]-L-lysyl-[protein] + 4 Fe(3+) + 2 hydrogen sulfide + 2 5'-deoxyadenosine + 2 L-methionine + 2 reduced [2Fe-2S]-[ferredoxin]. It functions in the pathway protein modification; protein lipoylation via endogenous pathway; protein N(6)-(lipoyl)lysine from octanoyl-[acyl-carrier-protein]: step 2/2. Functionally, catalyzes the radical-mediated insertion of two sulfur atoms into the C-6 and C-8 positions of the octanoyl moiety bound to the lipoyl domains of lipoate-dependent enzymes, thereby converting the octanoylated domains into lipoylated derivatives. This chain is Lipoyl synthase, found in Vibrio atlanticus (strain LGP32) (Vibrio splendidus (strain Mel32)).